The primary structure comprises 223 residues: Small ribosomal subunit protein uS3 (223 aa).

The 77-residue stretch at Ile-39–Lys-115 folds into the KH type-2 domain.

The protein belongs to the universal ribosomal protein uS3 family. Part of the 30S ribosomal subunit. Forms a tight complex with proteins S10 and S14.

Its function is as follows. Binds the lower part of the 30S subunit head. Binds mRNA in the 70S ribosome, positioning it for translation. The sequence is that of Small ribosomal subunit protein uS3 from Leuconostoc mesenteroides subsp. mesenteroides (strain ATCC 8293 / DSM 20343 / BCRC 11652 / CCM 1803 / JCM 6124 / NCDO 523 / NBRC 100496 / NCIMB 8023 / NCTC 12954 / NRRL B-1118 / 37Y).